A 501-amino-acid chain; its full sequence is MSNFPWLTIIVLLPISAGLLIPLLPNKGNRIIRWYTLGICLVEFLLITYIFCNYFHFDNQFIELKEDYNWINLLDFHWRLGIDGLSIGLILLTGFITTLATLAAWPITRNPRLSYFLMLAMYSGQVGLFASQDILLFFFMWELELIPVYLLLSMWGGKRRLYAATKFILYTAGSSVFLLMGALTMGLYGSDGPTLDFENLANRSYPIGLEIILYLGFFIAYAVKLPMVPLHTWLPDTHGEAHYSTCMLLAGILLKMGGYGLIRINMELLSHAHSIFAPWLVVIGAIQIVYSALTSLSQLNLKRRIAYSSVSHMGFVLIGIGSTTDIGVNGAILQMISHGLIGAALFFSAGVTYDRTRTLFLNQMGGIATSIPKIFTMFSSFSMASLALPGLSGFVAELMIFLGIVSSQNFSFLFKVVIIIVAATGIILTPIYLLSMLRQMFYGYRIIKNLTSYVTDAGPREIFIFICLFFPIIGIGFYPKLVLSLSNSKVESIISGNFSSK.

The next 15 membrane-spanning stretches (helical) occupy residues 4–24 (FPWL…IPLL), 37–57 (LGIC…YFHF), 87–107 (IGLI…AWPI), 113–130 (LSYF…GLFA), 134–154 (ILLF…LLSM), 167–187 (FILY…TMGL), 207–227 (IGLE…KLPM), 242–262 (HYST…YGLI), 274–294 (SIFA…SALT), 310–330 (VSHM…GVNG), 331–351 (AILQ…SAGV), 364–384 (MGGI…FSMA), 385–405 (SLAL…LGIV), 416–436 (VVII…LLSM), and 462–482 (IFIF…PKLV).

It belongs to the complex I subunit 4 family.

It is found in the plastid. Its subcellular location is the chloroplast thylakoid membrane. The catalysed reaction is a plastoquinone + NADH + (n+1) H(+)(in) = a plastoquinol + NAD(+) + n H(+)(out). It catalyses the reaction a plastoquinone + NADPH + (n+1) H(+)(in) = a plastoquinol + NADP(+) + n H(+)(out). This Anthoceros angustus (Hornwort) protein is NAD(P)H-quinone oxidoreductase chain 4, chloroplastic (ndhD).